Consider the following 238-residue polypeptide: Envelope glycoprotein G (238 aa).

The signal sequence occupies residues methionine 1–glycine 24. Topologically, residues valine 25–aspartate 189 are virion surface. 2 N-linked (GlcNAc...) asparagine; by host glycosylation sites follow: asparagine 28 and asparagine 49. Composition is skewed to polar residues over residues asparagine 28–arginine 42 and asparagine 49–aspartate 68. The interval asparagine 28 to proline 171 is disordered. Positions leucine 78–glycine 88 are enriched in acidic residues. The segment covering aspartate 89–arginine 100 has biased composition (basic and acidic residues). A helical membrane pass occupies residues threonine 190 to alanine 210. The Intravirion segment spans residues threonine 211–glycine 238.

The protein belongs to the alphaherpesvirinae glycoprotein G family.

Its subcellular location is the virion membrane. Its function is as follows. Chemokine-binding protein that inhibits neutrophils' chemotaxis. This chain is Envelope glycoprotein G (gG), found in Human herpesvirus 1 (strain 17) (HHV-1).